Consider the following 283-residue polypeptide: Pantothenate synthetase (283 aa).

30–37 lines the ATP pocket; it reads MGNLHAGH. Residue His37 is the Proton donor of the active site. Residue Gln61 participates in (R)-pantoate binding. A beta-alanine-binding site is contributed by Gln61. Residue 149–152 participates in ATP binding; that stretch reads GRKD. Gln155 lines the (R)-pantoate pocket. An ATP-binding site is contributed by 186–189; that stretch reads LSSR.

Belongs to the pantothenate synthetase family. In terms of assembly, homodimer.

It is found in the cytoplasm. The enzyme catalyses (R)-pantoate + beta-alanine + ATP = (R)-pantothenate + AMP + diphosphate + H(+). It participates in cofactor biosynthesis; (R)-pantothenate biosynthesis; (R)-pantothenate from (R)-pantoate and beta-alanine: step 1/1. Functionally, catalyzes the condensation of pantoate with beta-alanine in an ATP-dependent reaction via a pantoyl-adenylate intermediate. In Chromohalobacter salexigens (strain ATCC BAA-138 / DSM 3043 / CIP 106854 / NCIMB 13768 / 1H11), this protein is Pantothenate synthetase.